The primary structure comprises 624 residues: Actin-related protein 8 (624 aa).

The residue at position 1 (methionine 1) is an N-acetylmethionine. Positions 1-25 are enriched in basic and acidic residues; that stretch reads MTQAEKGDAENGKEKGGEKEKEQRG. Residues 1-29 form a disordered region; it reads MTQAEKGDAENGKEKGGEKEKEQRGVKRP. Positions 55 and 56 each coordinate ATP. Residue serine 132 is modified to Phosphoserine. 283 to 286 is a binding site for ATP; it reads DVGD. Serine 412 bears the Phosphoserine mark. Positions 430-460 are disordered; sequence SKQEQSAKATADRKSASKPIGFEGDLRGQSS.

Belongs to the actin family. ARP8 subfamily. In terms of assembly, component of the chromatin remodeling INO80 complex; specifically part of a complex module associated with the DBINO domain of INO80. Exists as monomers and dimers, but the dimer is most probably the biologically relevant form required for stable interactions with histones that exploits the twofold symmetry of the nucleosome core.

Its subcellular location is the nucleus. The protein resides in the chromosome. Its function is as follows. Plays an important role in the functional organization of mitotic chromosomes. Exhibits low basal ATPase activity, and unable to polymerize. Proposed core component of the chromatin remodeling INO80 complex which is involved in transcriptional regulation, DNA replication and probably DNA repair. Required for the recruitment of INO80 (and probably the INO80 complex) to sites of DNA damage Strongly prefer nucleosomes and H3-H4 tetramers over H2A-H2B dimers, suggesting it may act as a nucleosome recognition module within the complex. The chain is Actin-related protein 8 (ACTR8) from Ailuropoda melanoleuca (Giant panda).